The following is a 97-amino-acid chain: C-C motif chemokine 8 (97 aa).

Residues 1–23 (MKIYAVLLCLLLIAVPVSPEKLT) form the signal peptide. 2 disulfides stabilise this stretch: Cys-32–Cys-57 and Cys-33–Cys-73.

It belongs to the intercrine beta (chemokine CC) family. In terms of assembly, monomer or homodimer; in equilibrium.

It localises to the secreted. Chemotactic factor that attracts monocytes. This protein can bind heparin. The polypeptide is C-C motif chemokine 8 (Ccl8) (Mus musculus (Mouse)).